Reading from the N-terminus, the 151-residue chain is 3-dehydroquinate dehydratase (151 aa).

Tyr-24 functions as the Proton acceptor in the catalytic mechanism. Substrate-binding residues include Asn-76, His-82, and Asp-89. His-102 (proton donor) is an active-site residue. Substrate-binding positions include 103–104 and Arg-113; that span reads VS.

Belongs to the type-II 3-dehydroquinase family. As to quaternary structure, homododecamer.

The catalysed reaction is 3-dehydroquinate = 3-dehydroshikimate + H2O. The protein operates within metabolic intermediate biosynthesis; chorismate biosynthesis; chorismate from D-erythrose 4-phosphate and phosphoenolpyruvate: step 3/7. Functionally, catalyzes a trans-dehydration via an enolate intermediate. In Rhodopseudomonas palustris (strain ATCC BAA-98 / CGA009), this protein is 3-dehydroquinate dehydratase.